Consider the following 224-residue polypeptide: Glycerol-3-phosphate acyltransferase (224 aa).

6 consecutive transmembrane segments (helical) span residues Ile-14 to Leu-34, Tyr-70 to Ala-90, Thr-99 to Phe-119, Ile-129 to Ile-149, Leu-162 to Pro-182, and Ile-185 to Phe-205.

This sequence belongs to the PlsY family. In terms of assembly, probably interacts with PlsX.

It localises to the cell inner membrane. The enzyme catalyses an acyl phosphate + sn-glycerol 3-phosphate = a 1-acyl-sn-glycero-3-phosphate + phosphate. Its pathway is lipid metabolism; phospholipid metabolism. Functionally, catalyzes the transfer of an acyl group from acyl-phosphate (acyl-PO(4)) to glycerol-3-phosphate (G3P) to form lysophosphatidic acid (LPA). This enzyme utilizes acyl-phosphate as fatty acyl donor, but not acyl-CoA or acyl-ACP. This Helicobacter hepaticus (strain ATCC 51449 / 3B1) protein is Glycerol-3-phosphate acyltransferase.